The primary structure comprises 264 residues: tRNA pseudouridine synthase A (264 aa).

Asp51 acts as the Nucleophile in catalysis. Tyr109 contributes to the substrate binding site.

This sequence belongs to the tRNA pseudouridine synthase TruA family. In terms of assembly, homodimer.

It carries out the reaction uridine(38/39/40) in tRNA = pseudouridine(38/39/40) in tRNA. Its function is as follows. Formation of pseudouridine at positions 38, 39 and 40 in the anticodon stem and loop of transfer RNAs. The protein is tRNA pseudouridine synthase A of Yersinia pseudotuberculosis serotype O:1b (strain IP 31758).